Consider the following 140-residue polypeptide: 3-hydroxyacyl-[acyl-carrier-protein] dehydratase FabZ (140 aa).

His47 is an active-site residue.

Belongs to the thioester dehydratase family. FabZ subfamily.

It localises to the cytoplasm. The enzyme catalyses a (3R)-hydroxyacyl-[ACP] = a (2E)-enoyl-[ACP] + H2O. In terms of biological role, involved in unsaturated fatty acids biosynthesis. Catalyzes the dehydration of short chain beta-hydroxyacyl-ACPs and long chain saturated and unsaturated beta-hydroxyacyl-ACPs. The polypeptide is 3-hydroxyacyl-[acyl-carrier-protein] dehydratase FabZ (Streptococcus pneumoniae (strain 70585)).